The following is a 577-amino-acid chain: 2-succinyl-5-enolpyruvyl-6-hydroxy-3-cyclohexene-1-carboxylate synthase (577 aa).

Belongs to the TPP enzyme family. MenD subfamily. Homodimer. The cofactor is Mg(2+). It depends on Mn(2+) as a cofactor. Thiamine diphosphate serves as cofactor.

The catalysed reaction is isochorismate + 2-oxoglutarate + H(+) = 5-enolpyruvoyl-6-hydroxy-2-succinyl-cyclohex-3-ene-1-carboxylate + CO2. It participates in quinol/quinone metabolism; 1,4-dihydroxy-2-naphthoate biosynthesis; 1,4-dihydroxy-2-naphthoate from chorismate: step 2/7. It functions in the pathway quinol/quinone metabolism; menaquinone biosynthesis. Its function is as follows. Catalyzes the thiamine diphosphate-dependent decarboxylation of 2-oxoglutarate and the subsequent addition of the resulting succinic semialdehyde-thiamine pyrophosphate anion to isochorismate to yield 2-succinyl-5-enolpyruvyl-6-hydroxy-3-cyclohexene-1-carboxylate (SEPHCHC). This chain is 2-succinyl-5-enolpyruvyl-6-hydroxy-3-cyclohexene-1-carboxylate synthase, found in Christiangramia forsetii (strain DSM 17595 / CGMCC 1.15422 / KT0803) (Gramella forsetii).